The chain runs to 250 residues: Uracil-DNA glycosylase (250 aa).

Aspartate 91 serves as the catalytic Proton acceptor.

The protein belongs to the uracil-DNA glycosylase (UDG) superfamily. UNG family.

It localises to the host nucleus. It catalyses the reaction Hydrolyzes single-stranded DNA or mismatched double-stranded DNA and polynucleotides, releasing free uracil.. In terms of biological role, excises uracil residues from the DNA which can arise as a result of misincorporation of dUMP residues by DNA polymerase or due to deamination of cytosine. Excises uracil residues from the DNA which can arise as a result of misincorporation of dUMP residues by DNA polymerase or deamination of cytosines. Therefore may reduce deleterious uracil incorporation into the viral genome, particularly in terminally differentiated cells which lack DNA repair enzymes. This chain is Uracil-DNA glycosylase (UL114), found in Homo sapiens (Human).